The following is a 477-amino-acid chain: MASDAPTGGSLADRISNPAETTEPVADKAQLDGAASNQGGSDLAEPEYNVEVKLSDLQADPNNPLYSVKNFEDLGLDPRILQGLSAMNFRKPSKIQERALPLLMGNPPKNLVGQSQSGTGKTAAFVLNILSRLDLSSEQAQKTPQALILAPTRELARQIVGVIQVMGKFLDGLHIGTAVPADTNARPTRMEASVVVGTPGTVMDMIKKRIMVAAKLKVIVLDEADNMLDQQGLGDQCIRVKALLPRDIQVVLFSATFPAHVHQYASKFAPAANELTLQHEELTVEGIKQLYLDCASEEDKYRTLVQLYGLLTVGSSIIFVKTRASAVEIERRMVAEGHTVASLTGGIEGSQRDQIIDQFRAGHAKVLITTNVLARGIDVSTVSMVINYDIPELHQPPNRPRQADFQTYLHRIGRTGRFGRVGVSISFVSNREEWEMLNQIQKYFNTDIQRIDTKDWDEVEDIIKKTIKNTRAQAGFR.

The segment at 1–43 is disordered; sequence MASDAPTGGSLADRISNPAETTEPVADKAQLDGAASNQGGSDL. The Q motif signature appears at 69–97; that stretch reads KNFEDLGLDPRILQGLSAMNFRKPSKIQE. The region spanning 102-275 is the Helicase ATP-binding domain; sequence LLMGNPPKNL…SKFAPAANEL (174 aa). Position 115–122 (115–122) interacts with ATP; that stretch reads SQSGTGKT. Positions 222–225 match the DEAD box motif; it reads DEAD. The Helicase C-terminal domain occupies 303 to 459; that stretch reads TLVQLYGLLT…RIDTKDWDEV (157 aa).

The protein belongs to the DEAD box helicase family. DDX19/DBP5 subfamily. Associates with the nuclear pore complex.

The protein resides in the cytoplasm. It localises to the nucleus. It is found in the nuclear pore complex. Its subcellular location is the nucleus membrane. The enzyme catalyses ATP + H2O = ADP + phosphate + H(+). ATP-dependent RNA helicase associated with the nuclear pore complex and essential for mRNA export from the nucleus. May participate in a terminal step of mRNA export through the removal of proteins that accompany mRNA through the nucleopore complex. May also be involved in early transcription. This Emericella nidulans (strain FGSC A4 / ATCC 38163 / CBS 112.46 / NRRL 194 / M139) (Aspergillus nidulans) protein is ATP-dependent RNA helicase dbp5 (dbp5).